A 62-amino-acid chain; its full sequence is Photosystem II reaction center protein Z (62 aa).

The next 2 helical transmembrane spans lie at Ala8–Ala28 and Phe41–Ile61.

Belongs to the PsbZ family. In terms of assembly, PSII is composed of 1 copy each of membrane proteins PsbA, PsbB, PsbC, PsbD, PsbE, PsbF, PsbH, PsbI, PsbJ, PsbK, PsbL, PsbM, PsbT, PsbY, PsbZ, Psb30/Ycf12, at least 3 peripheral proteins of the oxygen-evolving complex and a large number of cofactors. It forms dimeric complexes.

Its subcellular location is the plastid. The protein localises to the chloroplast thylakoid membrane. Its function is as follows. May control the interaction of photosystem II (PSII) cores with the light-harvesting antenna, regulates electron flow through the 2 photosystem reaction centers. PSII is a light-driven water plastoquinone oxidoreductase, using light energy to abstract electrons from H(2)O, generating a proton gradient subsequently used for ATP formation. In Gossypium barbadense (Sea Island cotton), this protein is Photosystem II reaction center protein Z.